The chain runs to 214 residues: 3,4-dihydroxy-2-butanone 4-phosphate synthase (214 aa).

D-ribulose 5-phosphate contacts are provided by residues 37 to 38, Asp42, 150 to 154, and Glu174; these read RE and RPGHT. Glu38 contributes to the Mg(2+) binding site. His153 provides a ligand contact to Mg(2+).

This sequence belongs to the DHBP synthase family. As to quaternary structure, homodimer. The cofactor is Mg(2+). Mn(2+) serves as cofactor.

The catalysed reaction is D-ribulose 5-phosphate = (2S)-2-hydroxy-3-oxobutyl phosphate + formate + H(+). The protein operates within cofactor biosynthesis; riboflavin biosynthesis; 2-hydroxy-3-oxobutyl phosphate from D-ribulose 5-phosphate: step 1/1. Catalyzes the conversion of D-ribulose 5-phosphate to formate and 3,4-dihydroxy-2-butanone 4-phosphate. The chain is 3,4-dihydroxy-2-butanone 4-phosphate synthase from Mannheimia succiniciproducens (strain KCTC 0769BP / MBEL55E).